The sequence spans 123 residues: Holo-[acyl-carrier-protein] synthase (123 aa).

Positions 8 and 55 each coordinate Mg(2+).

It belongs to the P-Pant transferase superfamily. AcpS family. Mg(2+) serves as cofactor.

The protein localises to the cytoplasm. The enzyme catalyses apo-[ACP] + CoA = holo-[ACP] + adenosine 3',5'-bisphosphate + H(+). Functionally, transfers the 4'-phosphopantetheine moiety from coenzyme A to a Ser of acyl-carrier-protein. In Solidesulfovibrio magneticus (strain ATCC 700980 / DSM 13731 / RS-1) (Desulfovibrio magneticus), this protein is Holo-[acyl-carrier-protein] synthase.